A 432-amino-acid polypeptide reads, in one-letter code: MISAAQLLDELMGRDRNLAPDEKRSNVRWDHESVCKYYLCGFCPAELFTNTRSDLGPCEKIHDENLRKQYEKSSRFMKVGYERDFLRYLQSLLAEVERRIRRGHARLALSQNQQSSGAAGPTGKNEEKIQVLTDKIDVLLQQIEELGSEGKVEEAQGMMKLVEQLKEERELLRSTTSTIESFAAQEKQMEVCEVCGAFLIVGDAQSRVDDHLMGKQHMGYAKIKATVEELKEKLRKRTEEPDRDERLKKEKQEREEREKEREREREERERKRRREEEEREKERARDRERRKRSRSRSRHSSRTSDRRCSRSRDHKRSRSRERRRSRSRDRRRSRSHDRSERKHRSRSRDRRRSKSRDRKSYKHRSKSRDREQDRKSKEKEKRGSDDKKSSVKSSSREKQSEDTNTESKESDTKNEVNGTSEDIKSEGDTQSN.

At M1 the chain carries N-acetylmethionine. Phosphoserine is present on residues S3, S110, and S115. A coiled-coil region spans residues 124-181; that stretch reads KNEEKIQVLTDKIDVLLQQIEELGSEGKVEEAQGMMKLVEQLKEERELLRSTTSTIES. K231 is modified (N6-acetyllysine). The span at 234-287 shows a compositional bias: basic and acidic residues; the sequence is LRKRTEEPDRDERLKKEKQEREEREKEREREREERERKRRREEEEREKERARDR. A disordered region spans residues 234–432; sequence LRKRTEEPDR…IKSEGDTQSN (199 aa). Residues 288–301 are compositionally biased toward basic residues; the sequence is ERRKRSRSRSRHSS. Over residues 302-311 the composition is skewed to basic and acidic residues; it reads RTSDRRCSRS. Basic residues predominate over residues 312–367; it reads RDHKRSRSRERRRSRSRDRRRSRSHDRSERKHRSRSRDRRRSKSRDRKSYKHRSKS. The span at 368–414 shows a compositional bias: basic and acidic residues; the sequence is RDREQDRKSKEKEKRGSDDKKSSVKSSSREKQSEDTNTESKESDTKN. Position 420 is a phosphoserine (S420). Over residues 421–432 the composition is skewed to basic and acidic residues; sequence EDIKSEGDTQSN. K424 participates in a covalent cross-link: Glycyl lysine isopeptide (Lys-Gly) (interchain with G-Cter in SUMO1); alternate. K424 participates in a covalent cross-link: Glycyl lysine isopeptide (Lys-Gly) (interchain with G-Cter in SUMO2); alternate. S425 and S431 each carry phosphoserine.

It belongs to the Luc7 family. As to quaternary structure, may interact with SFRS1 and form homodimers. Interacts with JMJD6. Interacts with RBM25. Interacts with RSRC1 (via Arg/Ser-rich domain). Interacts with RRP1B.

The protein localises to the nucleus speckle. Functionally, binds cAMP regulatory element DNA sequence. May play a role in RNA splicing. The protein is Luc7-like protein 3 (LUC7L3) of Bos taurus (Bovine).